The following is a 794-amino-acid chain: Protein sel-1 homolog 1 (794 aa).

The signal sequence occupies residues 1 to 21 (MRVRIGLTLLLCAVLLSLASA). Residues 21-50 (ASSDEEGSQDESLDSKTTLTSDESVKDHTT) are disordered. The tract at residues 22-737 (SSDEEGSQDE…DMFTQLDMDQ (716 aa)) is interaction with ERLEC1, OS9 and SYVN1. The Lumenal segment spans residues 22-738 (SSDEEGSQDE…MFTQLDMDQL (717 aa)). Residues 23 to 32 (SDEEGSQDES) show a composition bias toward acidic residues. Ser63 carries the phosphoserine modification. A compositionally biased stretch (acidic residues) spans 64-77 (EESELESSIQEEED). A disordered region spans residues 64–109 (EESELESSIQEEEDSLKSQEGESVTEDISFLESPNPENKDYEEPKK). One can recognise a Fibronectin type-II domain in the interval 122-170 (AHGEPCHFPFLFLDKEYDECTSDGREDGRLWCATTYDYKADEKWGFCET). 2 cysteine pairs are disulfide-bonded: Cys127/Cys153 and Cys141/Cys168. 9 Sel1-like repeats span residues 183-218 (AEMM…SMNH), 219-254 (TKAL…EEGS), 255-290 (PKGQ…LGGN), 291-326 (LIAH…NHVA), 373-409 (VQAQ…NAGN), 410-446 (SHAM…DMGN), 447-482 (PVGQ…EQGW), 483-518 (VDGQ…QGGH), and 519-554 (ILAF…ERGR). Asn195 and Asn217 each carry an N-linked (GlcNAc...) asparagine glycan. Asn272 is a glycosylation site (N-linked (GlcNAc...) asparagine). An important for homodimerization and oligomerization region spans residues 352 to 537 (NSGMLEEDLI…MHASGTGVMR (186 aa)). Residue Asn431 is glycosylated (N-linked (GlcNAc...) asparagine). Asn608 is a glycosylation site (N-linked (GlcNAc...) asparagine). Sel1-like repeat units lie at residues 627-662 (TVAR…EQQH) and 664-699 (AQAM…EASP). Residues 643-723 (TDVDYETAFI…VVYFLQYIRE (81 aa)) are interaction with SYVN1. Residues 738–794 (LLGPEWDLYLMTIIALLLGTVIAYRQRQHQDMPAPRPPGPRPAPPQQEGPPEQQPPQ) form a mediates retention in the endoplasmic reticulum region. A helical transmembrane segment spans residues 739–759 (LGPEWDLYLMTIIALLLGTVI). Topologically, residues 760-794 (AYRQRQHQDMPAPRPPGPRPAPPQQEGPPEQQPPQ) are cytoplasmic. The tract at residues 766-794 (HQDMPAPRPPGPRPAPPQQEGPPEQQPPQ) is disordered. A compositionally biased stretch (pro residues) spans 771-794 (APRPPGPRPAPPQQEGPPEQQPPQ).

This sequence belongs to the sel-1 family. Homodimer and homooligomer. May form a complex with ERLEC1, HSPA5, OS9, and SYVN1. Interacts with FOXRED2 and EDEM1. Interacts with LPL. Interacts with LMF1; may stabilize the complex formed by LPL and LMF1 and thereby promote the export of LPL dimers. Component of the HRD1 complex, which comprises at least SYNV1/HRD1, DERL1/2, FAM8A1, HERPUD1/HERP, OS9, SEL1L and UBE2J1. SYNV1 assembles with SEL1L and FAM8A1 through its transmembrane domains, but interaction with its cytoplasmic domain is required to confer stability to FAM8A1 and enhance recruitment of HERPUD1. The interaction with SYNV1/HRD1 is direct. As to quaternary structure, (Microbial infection) Interacts with human cytomegalovirus protein UL148. Post-translationally, N-glycosylated. In terms of tissue distribution, highly expressed in pancreas.

It is found in the endoplasmic reticulum membrane. Functionally, plays a role in the endoplasmic reticulum quality control (ERQC) system also called ER-associated degradation (ERAD) involved in ubiquitin-dependent degradation of misfolded endoplasmic reticulum proteins. Enhances SYVN1 stability. Plays a role in LPL maturation and secretion. Required for normal differentiation of the pancreas epithelium, and for normal exocrine function and survival of pancreatic cells. May play a role in Notch signaling. The protein is Protein sel-1 homolog 1 of Homo sapiens (Human).